Here is a 324-residue protein sequence, read N- to C-terminus: Methenyltetrahydromethanopterin cyclohydrolase (324 aa).

Belongs to the MCH family.

Its subcellular location is the cytoplasm. The catalysed reaction is 5,10-methenyl-5,6,7,8-tetrahydromethanopterin + H2O = N(5)-formyl-5,6,7,8-tetrahydromethanopterin + H(+). Its pathway is one-carbon metabolism; formaldehyde degradation; formate from formaldehyde (H(4)MPT route): step 3/5. Catalyzes the hydrolysis of methenyl-H(4)MPT(+) to 5-formyl-H(4)MPT. The polypeptide is Methenyltetrahydromethanopterin cyclohydrolase (Methylobacterium nodulans (strain LMG 21967 / CNCM I-2342 / ORS 2060)).